A 271-amino-acid chain; its full sequence is MASENMTPQDYIGHHLTNLQMDLRTFSLVDPHNPPATFWTLNIDSMFFSVVLGLLFLAMFRSVAKKATSGVPGKFQTAIELVIGFVHGSVKDMYHGKSKLIAPLALTVFVWVFLMNLMDLLPIDLLPYIGEHVFGLPALRVVPSADVNITLSMALGVFILILFYSIKMKGVSGFVKELTLQPFNHWAFIPVNLILEGVSLLSKPVSLGLRLFGNMYAGELIFILIAGLLPWWSQWILNVPWAIFHILIITLQAFIFMVLTIVYLSMASEEH.

The next 5 membrane-spanning stretches (helical) occupy residues 38 to 58 (FWTL…LFLA), 100 to 120 (LIAP…LMDL), 146 to 166 (DVNI…FYSI), 220 to 240 (LIFI…LNVP), and 242 to 262 (AIFH…LTIV).

Belongs to the ATPase A chain family. As to quaternary structure, F-type ATPases have 2 components, CF(1) - the catalytic core - and CF(0) - the membrane proton channel. CF(1) has five subunits: alpha(3), beta(3), gamma(1), delta(1), epsilon(1). CF(0) has three main subunits: a(1), b(2) and c(9-12). The alpha and beta chains form an alternating ring which encloses part of the gamma chain. CF(1) is attached to CF(0) by a central stalk formed by the gamma and epsilon chains, while a peripheral stalk is formed by the delta and b chains.

The protein localises to the cell inner membrane. Functionally, key component of the proton channel; it plays a direct role in the translocation of protons across the membrane. The chain is ATP synthase subunit a from Enterobacter sp. (strain 638).